The following is a 335-amino-acid chain: Beta-ketoacyl-[acyl-carrier-protein] synthase III (335 aa).

Active-site residues include C118 and H259. Residues Q260–R264 form an ACP-binding region. N289 is an active-site residue.

This sequence belongs to the thiolase-like superfamily. FabH family. In terms of assembly, homodimer.

It is found in the cytoplasm. It catalyses the reaction malonyl-[ACP] + acetyl-CoA + H(+) = 3-oxobutanoyl-[ACP] + CO2 + CoA. It functions in the pathway lipid metabolism; fatty acid biosynthesis. Its function is as follows. Catalyzes the condensation reaction of fatty acid synthesis by the addition to an acyl acceptor of two carbons from malonyl-ACP. Catalyzes the first condensation reaction which initiates fatty acid synthesis and may therefore play a role in governing the total rate of fatty acid production. Possesses both acetoacetyl-ACP synthase and acetyl transacylase activities. Its substrate specificity determines the biosynthesis of branched-chain and/or straight-chain of fatty acids. The sequence is that of Beta-ketoacyl-[acyl-carrier-protein] synthase III from Chlamydia caviae (strain ATCC VR-813 / DSM 19441 / 03DC25 / GPIC) (Chlamydophila caviae).